A 164-amino-acid polypeptide reads, in one-letter code: Arginine repressor (164 aa).

This sequence belongs to the ArgR family.

The protein localises to the cytoplasm. The protein operates within amino-acid biosynthesis; L-arginine biosynthesis [regulation]. Its function is as follows. Regulates arginine biosynthesis genes. In Mycolicibacterium paratuberculosis (strain ATCC BAA-968 / K-10) (Mycobacterium paratuberculosis), this protein is Arginine repressor.